The sequence spans 164 residues: V-type proton ATPase subunit c' (164 aa).

The Lumenal segment spans residues 1-15 (MTDDLVNEYAPAFAP). The helical transmembrane segment at 16–36 (FFGFAGCAAAMILSSLGAAIG) threads the bilayer. Residues 37-58 (TAKSGIGISGIGTFRPELIMKS) lie on the Cytoplasmic side of the membrane. Residues 59–79 (LIPVVMSGILAVYGLVVAVLV) traverse the membrane as a helical segment. Over 80–97 (AGGLSPTEEYTLFNGFMH) the chain is Lumenal. A helical membrane pass occupies residues 98 to 118 (LAAGLCVGFACLSSGYAIGIV). At 119-135 (GDVGVRKFMHQPRLFVG) the chain is on the cytoplasmic side. Residues 136–156 (IVLILIFAEVLGLYGMIIALI) form a helical membrane-spanning segment. At 157–164 (LNTRGSGN) the chain is on the lumenal side.

This sequence belongs to the V-ATPase proteolipid subunit family. V-ATPase is a heteromultimeric enzyme composed of a peripheral catalytic V1 complex (components A to H) attached to an integral membrane V0 proton pore complex (components: a, c, c', c'', d, e, f and VOA1). The decameric c-ring forms the proton-conducting pore, and is composed of eight proteolipid subunits c, one subunit c' and one subunit c''.

The protein resides in the vacuole membrane. Proton-conducting pore forming subunit of the V0 complex of vacuolar(H+)-ATPase (V-ATPase), a multisubunit enzyme composed of a peripheral complex (V1) that hydrolyzes ATP and a membrane integral complex (V0) that translocates protons. V-ATPase is responsible for acidifying and maintaining the pH of intracellular compartments. This Eremothecium gossypii (strain ATCC 10895 / CBS 109.51 / FGSC 9923 / NRRL Y-1056) (Yeast) protein is V-type proton ATPase subunit c' (VMA11).